The primary structure comprises 693 residues: Tegument protein UL47 (693 aa).

2 disordered regions span residues Met1–Gly32 and Glu48–Gly126. The span at Glu48–Gly57 shows a compositional bias: acidic residues. The segment at Glu50–Arg75 is RNA-binding. A Nuclear localization signal motif is present at residues Arg63–Arg75. Residues Arg63–Arg75 show a composition bias toward basic residues. Residues Ser647–Glu670 carry the Nuclear export signal motif.

Belongs to the alphaherpesvirinae HHV-1 UL47 family. Interacts with US3 kinase. Interacts with UL31 and UL34; these interactions seem important for efficient virion nuclear egress. Interacts with UL41/VHS. Post-translationally, phosphorylated by US3. This phosphorylation is required for proper nuclear localization.

The protein resides in the virion tegument. Its subcellular location is the host nucleus. It localises to the host cytoplasm. Tegument protein that can bind to various RNA transcripts. Plays a role in the attenuation of selective viral and cellular mRNA degradation by modulating the activity of host shutoff RNase UL41/VHS. Also plays a role in the primary envelopment of virions in the perinuclear space, probably by interacting with two nuclear egress proteins UL31 and UL34. In Homo sapiens (Human), this protein is Tegument protein UL47.